The sequence spans 580 residues: Acyl-coenzyme A synthetase ACSM4, mitochondrial (580 aa).

The transit peptide at 1–22 (MKVLLHCQRLRFIWLAKPAGRH) directs the protein to the mitochondrion. ATP is bound by residues 229-237 (TSGTTGSPK), 368-373 (EGYGQT), Asp-455, Arg-470, and Lys-566.

It belongs to the ATP-dependent AMP-binding enzyme family. Mg(2+) is required as a cofactor. Requires Mn(2+) as cofactor.

It localises to the mitochondrion. It catalyses the reaction a medium-chain fatty acid + ATP + CoA = a medium-chain fatty acyl-CoA + AMP + diphosphate. The catalysed reaction is hexanoate + ATP + CoA = hexanoyl-CoA + AMP + diphosphate. The enzyme catalyses octanoate + ATP + CoA = octanoyl-CoA + AMP + diphosphate. It carries out the reaction decanoate + ATP + CoA = decanoyl-CoA + AMP + diphosphate. It catalyses the reaction dodecanoate + ATP + CoA = dodecanoyl-CoA + AMP + diphosphate. Its function is as follows. Catalyzes the activation of fatty acids by CoA to produce an acyl-CoA, the first step in fatty acid metabolism. Capable of activating medium-chain fatty acids with a preference for C6-12 fatty acids. The polypeptide is Acyl-coenzyme A synthetase ACSM4, mitochondrial (Acsm4) (Mus musculus (Mouse)).